The sequence spans 336 residues: Fructose-1,6-bisphosphatase class 1 (336 aa).

The Mg(2+) site is built by E90, D112, L114, and D115. Substrate is bound by residues 115-118 (DGSS), N211, and K277. A Mg(2+)-binding site is contributed by E283.

This sequence belongs to the FBPase class 1 family. As to quaternary structure, homotetramer. Mg(2+) is required as a cofactor.

The protein resides in the cytoplasm. The enzyme catalyses beta-D-fructose 1,6-bisphosphate + H2O = beta-D-fructose 6-phosphate + phosphate. The protein operates within carbohydrate biosynthesis; gluconeogenesis. In Pseudomonas entomophila (strain L48), this protein is Fructose-1,6-bisphosphatase class 1.